A 357-amino-acid chain; its full sequence is Trans-resveratrol di-O-methyltransferase (357 aa).

S-adenosyl-L-methionine is bound by residues Gly200, Asp223, Asp243, Met244, and Lys257. The active-site Proton acceptor is the His261.

This sequence belongs to the class I-like SAM-binding methyltransferase superfamily. Cation-independent O-methyltransferase family. COMT subfamily.

The catalysed reaction is trans-resveratrol + 2 S-adenosyl-L-methionine = pterostilbene + 2 S-adenosyl-L-homocysteine + 2 H(+). Catalyzes the biosynthesis of pterostilbene from resveratrol. Pterostilbene has both antifungal and pharmacological properties. Also has activity toward resveratrol monomethyl ether (RME). In Vitis vinifera (Grape), this protein is Trans-resveratrol di-O-methyltransferase (ROMT).